The primary structure comprises 200 residues: Recombination protein RecR (200 aa).

The C4-type zinc finger occupies 60 to 75 (CVYCQALTEDDVCNIC). Residues 83 to 177 (TKLCIIESML…KISRIGFGVP (95 aa)) form the Toprim domain.

The protein belongs to the RecR family.

Functionally, may play a role in DNA repair. It seems to be involved in an RecBC-independent recombinational process of DNA repair. It may act with RecF and RecO. The chain is Recombination protein RecR from Francisella tularensis subsp. tularensis (strain SCHU S4 / Schu 4).